A 296-amino-acid chain; its full sequence is 4-hydroxy-tetrahydrodipicolinate synthase (296 aa).

Thr-49 is a binding site for pyruvate. Tyr-137 (proton donor/acceptor) is an active-site residue. Residue Lys-165 is the Schiff-base intermediate with substrate of the active site. Residue Ile-207 coordinates pyruvate.

Belongs to the DapA family. In terms of assembly, homotetramer; dimer of dimers.

It localises to the cytoplasm. The catalysed reaction is L-aspartate 4-semialdehyde + pyruvate = (2S,4S)-4-hydroxy-2,3,4,5-tetrahydrodipicolinate + H2O + H(+). It participates in amino-acid biosynthesis; L-lysine biosynthesis via DAP pathway; (S)-tetrahydrodipicolinate from L-aspartate: step 3/4. Catalyzes the condensation of (S)-aspartate-beta-semialdehyde [(S)-ASA] and pyruvate to 4-hydroxy-tetrahydrodipicolinate (HTPA). The protein is 4-hydroxy-tetrahydrodipicolinate synthase of Afipia carboxidovorans (strain ATCC 49405 / DSM 1227 / KCTC 32145 / OM5) (Oligotropha carboxidovorans).